The primary structure comprises 97 residues: Small ribosomal subunit protein bS6 (97 aa).

This sequence belongs to the bacterial ribosomal protein bS6 family.

Functionally, binds together with bS18 to 16S ribosomal RNA. This chain is Small ribosomal subunit protein bS6 (rpsF), found in Lactococcus lactis subsp. lactis (strain IL1403) (Streptococcus lactis).